Reading from the N-terminus, the 424-residue chain is Tubulin gamma chain, nucleomorph (424 aa).

Residue 137–143 coordinates GTP; the sequence is NGGTGAG.

This sequence belongs to the tubulin family.

Tubulin is the major constituent of microtubules. The gamma chain is found at microtubule organizing centers (MTOC) such as the spindle poles or the centrosome, suggesting that it is involved in the minus-end nucleation of microtubule assembly. The polypeptide is Tubulin gamma chain, nucleomorph (tubG) (Guillardia theta (Cryptophyte)).